The following is a 108-amino-acid chain: uncharacterized protein (108 aa).

An N-terminal signal peptide occupies residues 1–20 (MNLKSIIFVLFIAFFAFSLA). N39 is a glycosylation site (N-linked (GlcNAc...) asparagine).

The protein belongs to the Dictyostelium gerABC family.

The protein localises to the secreted. This is an uncharacterized protein from Dictyostelium discoideum (Social amoeba).